A 309-amino-acid chain; its full sequence is Glutaminase (309 aa).

Substrate-binding residues include Ser-64, Asn-114, Glu-160, Asn-167, Tyr-191, Tyr-243, and Val-261.

This sequence belongs to the glutaminase family. In terms of assembly, homotetramer.

It carries out the reaction L-glutamine + H2O = L-glutamate + NH4(+). In Methylorubrum extorquens (strain PA1) (Methylobacterium extorquens), this protein is Glutaminase.